We begin with the raw amino-acid sequence, 513 residues long: ATP synthase subunit alpha (513 aa).

An ATP-binding site is contributed by Gly-169–Thr-176.

This sequence belongs to the ATPase alpha/beta chains family. F-type ATPases have 2 components, CF(1) - the catalytic core - and CF(0) - the membrane proton channel. CF(1) has five subunits: alpha(3), beta(3), gamma(1), delta(1), epsilon(1). CF(0) has three main subunits: a(1), b(2) and c(9-12). The alpha and beta chains form an alternating ring which encloses part of the gamma chain. CF(1) is attached to CF(0) by a central stalk formed by the gamma and epsilon chains, while a peripheral stalk is formed by the delta and b chains.

It is found in the cell inner membrane. It catalyses the reaction ATP + H2O + 4 H(+)(in) = ADP + phosphate + 5 H(+)(out). In terms of biological role, produces ATP from ADP in the presence of a proton gradient across the membrane. The alpha chain is a regulatory subunit. This Francisella tularensis subsp. holarctica (strain OSU18) protein is ATP synthase subunit alpha.